The chain runs to 393 residues: NAD(P)H-quinone oxidoreductase subunit H, chloroplastic (393 aa).

This sequence belongs to the complex I 49 kDa subunit family. NDH is composed of at least 16 different subunits, 5 of which are encoded in the nucleus.

It localises to the plastid. The protein localises to the chloroplast thylakoid membrane. It carries out the reaction a plastoquinone + NADH + (n+1) H(+)(in) = a plastoquinol + NAD(+) + n H(+)(out). The enzyme catalyses a plastoquinone + NADPH + (n+1) H(+)(in) = a plastoquinol + NADP(+) + n H(+)(out). Functionally, NDH shuttles electrons from NAD(P)H:plastoquinone, via FMN and iron-sulfur (Fe-S) centers, to quinones in the photosynthetic chain and possibly in a chloroplast respiratory chain. The immediate electron acceptor for the enzyme in this species is believed to be plastoquinone. Couples the redox reaction to proton translocation, and thus conserves the redox energy in a proton gradient. In Daucus carota (Wild carrot), this protein is NAD(P)H-quinone oxidoreductase subunit H, chloroplastic.